The sequence spans 212 residues: Ras-like protein (212 aa).

15–22 (GGGGVGKS) lines the GTP pocket. An Effector region motif is present at residues 37 to 45 (YDPTIEDSY). Residues 62–66 (DTAGQ) and 121–124 (NKCD) each bind GTP. 2 S-palmitoyl cysteine lipidation sites follow: cysteine 205 and cysteine 206. Position 209 is a cysteine methyl ester (cysteine 209). A lipid anchor (S-geranylgeranyl cysteine) is attached at cysteine 209. Residues 210–212 (IVM) constitute a propeptide, removed in mature form.

The protein belongs to the small GTPase superfamily. Ras family.

Its subcellular location is the cell membrane. The enzyme catalyses GTP + H2O = GDP + phosphate + H(+). Alternates between an inactive form bound to GDP and an active form bound to GTP. Activated by a guanine nucleotide-exchange factor (GEF) and inactivated by a GTPase-activating protein (GAP). This chain is Ras-like protein (rasA), found in Emericella nidulans (strain FGSC A4 / ATCC 38163 / CBS 112.46 / NRRL 194 / M139) (Aspergillus nidulans).